Consider the following 299-residue polypeptide: Putative adenosine/adenine deaminase (299 aa).

2 residues coordinate Zn(2+): H16 and H18. Positions 18 and 157 each coordinate substrate. Residue H184 coordinates Zn(2+). The Proton donor role is filled by E187. Residue D265 coordinates Zn(2+). Substrate is bound at residue D266.

This sequence belongs to the metallo-dependent hydrolases superfamily. Adenosine and AMP deaminases family. Requires Zn(2+) as cofactor.

Putative nucleoside deaminase. May catalyze the hydrolytic deamination of adenosine or some similar substrate and play a role in purine metabolism. The sequence is that of Putative adenosine/adenine deaminase from Treponema pallidum (strain Nichols).